Here is a 386-residue protein sequence, read N- to C-terminus: Succinate--CoA ligase [ADP-forming] subunit beta (386 aa).

The 236-residue stretch at 9 to 244 (KELLRQYGVA…LDEEDPKEIE (236 aa)) folds into the ATP-grasp domain. ATP is bound by residues lysine 46, 53–55 (GRG), glutamate 99, cysteine 102, and glutamate 107. Mg(2+) is bound by residues asparagine 199 and aspartate 213. Substrate contacts are provided by residues asparagine 264 and 321-323 (GIM).

The protein belongs to the succinate/malate CoA ligase beta subunit family. In terms of assembly, heterotetramer of two alpha and two beta subunits. It depends on Mg(2+) as a cofactor.

It catalyses the reaction succinate + ATP + CoA = succinyl-CoA + ADP + phosphate. The enzyme catalyses GTP + succinate + CoA = succinyl-CoA + GDP + phosphate. It participates in carbohydrate metabolism; tricarboxylic acid cycle; succinate from succinyl-CoA (ligase route): step 1/1. In terms of biological role, succinyl-CoA synthetase functions in the citric acid cycle (TCA), coupling the hydrolysis of succinyl-CoA to the synthesis of either ATP or GTP and thus represents the only step of substrate-level phosphorylation in the TCA. The beta subunit provides nucleotide specificity of the enzyme and binds the substrate succinate, while the binding sites for coenzyme A and phosphate are found in the alpha subunit. This Halalkalibacterium halodurans (strain ATCC BAA-125 / DSM 18197 / FERM 7344 / JCM 9153 / C-125) (Bacillus halodurans) protein is Succinate--CoA ligase [ADP-forming] subunit beta.